The sequence spans 459 residues: Cyclooctat-9-en-7-ol 5-monooxygenase (459 aa).

Positions 1–27 (MRERGPVTPAKSSAPPERPWTTGTAPG) are disordered. C408 contacts heme.

It belongs to the cytochrome P450 family. Heme serves as cofactor.

The catalysed reaction is cyclooctat-9-en-7-ol + AH2 + O2 = cyclooctat-9-ene-5,7-diol + A + H2O. Functionally, involved in the biosynthesis of cyclooctatin, a potent inhibitor of lysophospholipase. Catalyzes the stereospecific hydroxylation of cyclooctat-9-en-7-ol to form cyclooctat-9-ene-5,7-diol. The sequence is that of Cyclooctat-9-en-7-ol 5-monooxygenase from Streptomyces melanosporofaciens.